The primary structure comprises 927 residues: UPF0182 protein bll7333 (927 aa).

The next 7 helical transmembrane spans lie at 17–37, 65–85, 134–154, 185–205, 220–240, 264–284, and 297–317; these read AVVG…LLAL, AVVF…NGWL, LALL…QFVY, WMML…LVHG, VIAH…WSFG, VGLP…LAAW, and AAFL…PVLF.

Belongs to the UPF0182 family.

The protein localises to the cell membrane. The protein is UPF0182 protein bll7333 of Bradyrhizobium diazoefficiens (strain JCM 10833 / BCRC 13528 / IAM 13628 / NBRC 14792 / USDA 110).